The sequence spans 320 residues: Protein PXR1 (320 aa).

The span at 1–11 shows a compositional bias: basic residues; it reads MGLAGPRKRTK. The segment at 1 to 24 is disordered; it reads MGLAGPRKRTKISHDPNNTAWSRS. A compositionally biased stretch (polar residues) spans 15–24; it reads DPNNTAWSRS. The G-patch domain maps to 25–79; it reads TSGYGHKIMSAQGWTPGSFLGASNAAHADHFTAGSAGHIRVILKDDNLGLGAKLR. The segment at 152-298 is disordered; sequence GEEVQTPQIS…MGRQFTRGRH (147 aa). Residues 169 to 182 are compositionally biased toward basic residues; the sequence is KRPKKARKKEKRRA. Basic and acidic residues-rich tracts occupy residues 203-214, 243-256, and 269-288; these read RKENKEKKKSSD, KDPE…HDDS, and QESR…EHRP.

Belongs to the PINX1 family.

It is found in the nucleus. It localises to the nucleolus. Functionally, involved in rRNA-processing at A0, A1 and A2 sites and negatively regulates telomerase. In Ajellomyces capsulatus (strain NAm1 / WU24) (Darling's disease fungus), this protein is Protein PXR1 (PXR1).